Reading from the N-terminus, the 278-residue chain is Sulfur carrier protein FdhD (278 aa).

Cysteine 121 functions as the Cysteine persulfide intermediate in the catalytic mechanism. 260–265 lines the Mo-bis(molybdopterin guanine dinucleotide) pocket; the sequence is FCKPGR.

The protein belongs to the FdhD family.

It localises to the cytoplasm. In terms of biological role, required for formate dehydrogenase (FDH) activity. Acts as a sulfur carrier protein that transfers sulfur from IscS to the molybdenum cofactor prior to its insertion into FDH. This Klebsiella pneumoniae subsp. pneumoniae (strain ATCC 700721 / MGH 78578) protein is Sulfur carrier protein FdhD.